A 355-amino-acid chain; its full sequence is Poly(3-hydroxyalkanoate) polymerase subunit PhaC (355 aa).

The region spanning 69–334 (PLLIVYALVN…LAFPGGHIGI (266 aa)) is the AB hydrolase-1 domain. Cys-149 is a catalytic residue.

This sequence belongs to the PHA/PHB synthase family. Type III PhaC subfamily. A large complex of PhaC and PhaE; the ratio of the subunits has been estimated to be from 1:1 to 4:1, with more PhaE than PhaC.

It is found in the cytoplasm. The catalysed reaction is (3R)-3-hydroxybutanoyl-CoA + [(3R)-hydroxybutanoate](n) = [(3R)-hydroxybutanoate](n+1) + CoA. It participates in biopolymer metabolism; poly-(R)-3-hydroxybutanoate biosynthesis. Functionally, polymerizes D(-)-3-hydroxybutyryl-CoA to create polyhydroxybutyrate (PHB) which consists of thousands of hydroxybutyrate molecules linked end to end. This subunit has catalytic activity that is enhanced 100-fold by PhaE, the non-catalytic subunit. This chain is Poly(3-hydroxyalkanoate) polymerase subunit PhaC, found in Allochromatium vinosum (strain ATCC 17899 / DSM 180 / NBRC 103801 / NCIMB 10441 / D) (Chromatium vinosum).